A 483-amino-acid chain; its full sequence is Rhamnulokinase (483 aa).

ATP is bound at residue 11 to 15 (ASSGR). Substrate is bound by residues glycine 79 and 234–236 (HDT). Residue aspartate 235 is the Proton acceptor of the active site. Threonine 257 is an ATP binding site. A substrate-binding site is contributed by asparagine 294. Position 302 (glutamine 302) interacts with ATP. Cysteine 352 and cysteine 369 are joined by a disulfide. Glycine 401 contacts ATP.

Belongs to the rhamnulokinase family. Mg(2+) is required as a cofactor.

It catalyses the reaction L-rhamnulose + ATP = L-rhamnulose 1-phosphate + ADP + H(+). It participates in carbohydrate degradation; L-rhamnose degradation; glycerone phosphate from L-rhamnose: step 2/3. Its function is as follows. Involved in the catabolism of L-rhamnose (6-deoxy-L-mannose). Catalyzes the transfer of the gamma-phosphate group from ATP to the 1-hydroxyl group of L-rhamnulose to yield L-rhamnulose 1-phosphate. In Listeria monocytogenes serotype 4b (strain CLIP80459), this protein is Rhamnulokinase.